The sequence spans 1342 residues: MKRIFSLLEKTWLGAPIQFAWQKTSGNYLAVTGADYIVKIFDRHGQKRSEINLPGNCVAMDWDKDGDVLAVIAEKSSCIYLWDANTNKTSQLDNGMRDQMSFLLWSKVGSFLAVGTVKGNLLIYNHQTSRKIPVLGKHTKRITCGCWNAENLLALGGEDKMITVSNQEGDTIRQTQVRSEPSNMQFFLMKMDDRTSAAESMISVVLGKKTLFFLNLNEPDNPADLEFQQDFGNIVCYNWYGDGRIMIGFSCGHFVVISTHTGELGQEIFQARNHKDNLTSIAVSQTLNKVATCGDNCIKIQDLVDLKDMYVILNLDEENKGLGTLSWTDDGQLLALSTQRGSLHVFLTKLPILGDACSTRIAYLTSLLEVTVANPVEGELPITVSVDVEPNFVAVGLYHLAVGMNNRAWFYVLGENAVKKLKDMEYLGTVASICLHSDYAAALFEGKVQLHLIESEILDAQEERETRLFPAVDDKCRILCHALTSDFLIYGTDTGVVQYFYIEDWQFVNDYRHPVSVKKIFPDPNGTRLVFIDEKSDGFVYCPVNDATYEIPDFSPTIKGVLWENWPMDKGVFIAYDDDKVYTYVFHKDTIQGAKVILAGSTKVPFAHKPLLLYNGELTCQTQSGKVNNIYLSTHGFLSNLKDTGPDELRPMLAQNLMLKRFSDAWEMCRILNDEAAWNELARACLHHMEVEFAIRVYRRIGNVGIVMSLEQIKGIEDYNLLAGHLAMFTNDYNLAQDLYLASSCPIAALEMRRDLQHWDSALQLAKHLAPDQIPFISKEYAIQLEFAGDYVNALAHYEKGITGDNKEHDEACLAGVAQMSIRMGDIRRGVNQALKHPSRVLKRDCGAILENMKQFSEAAQLYEKGLYYDKAASVYIRSKNWAKVGDLLPHVSSPKIHLQYAKAKEADGRYKEAVVAYENAKQWQSVIRIYLDHLNNPEKAVNIVRETQSLDGAKMVARFFLQLGDYGSAIQFLVMSKCNNEAFTLAQQHNKMEIYADIIGSEDTTNEDYQSIALYFEGEKRYLQAGKFFLLCGQYSRALKHFLKCPSSEDNVAIEMAIETVGQAKDELLTNQLIDHLLGENDGMPKDAKYLFRLYMALKQYREAAQTAIIIAREEQSAGNYRNAHDVLFSMYAELKSQKIKIPSEMATNLMILHSYILVKIHVKNGDHMKGARMLIRVANNISKFPSHIVPILTSTVIECHRAGLKNSAFSFAAMLMRPEYRSKIDAKYKKKIEGMVRRPDISEIEEATTPCPFCKFLLPECELLCPGCKNSIPYCIATGRHMLKDDWTVCPHCDFPALYSELKIMLNTESTCPMCSERLNAAQLKKISDCTQYLRTEEEL.

6 WD repeats span residues 11–51 (TWLG…RSEI), 52–92 (NLPG…TSQL), 95–134 (GMRDQMSFLLWSKVGSFLAVGTVKGNLLIYNHQTSRKIPV), 137–175 (KHTKRITCGCWNAENLLALGGEDKMITVSNQEGDTIRQT), 273–311 (NHKDNLTSIAVSQTLNKVATCGDNCIKIQDLVDLKDMYV), and 317–356 (EENKGLGTLSWTDDGQLLALSTQRGSLHVFLTKLPILGDA). 6 TPR repeats span residues 736–769 (AQDLYLASSCPIAALEMRRDLQHWDSALQLAKHL), 775–808 (PFISKEYAIQLEFAGDYVNALAHYEKGITGDNKE), 840–873 (RVLKRDCGAILENMKQFSEAAQLYEKGLYYDKAA), 895–928 (PKIHLQYAKAKEADGRYKEAVVAYENAKQWQSVI), 951–984 (LDGAKMVARFFLQLGDYGSAIQFLVMSKCNNEAF), and 1020–1053 (EKRYLQAGKFFLLCGQYSRALKHFLKCPSSEDNV).

In terms of assembly, component of the IFT complex A (IFT-A) complex. IFT-A complex is divided into a core subcomplex composed of IFT122:IFT140:WDR19 which is associated with TULP3 and a peripheral subcomplex composed of IFT43:WDR35:TTC21B. Interacts (via C-terminal region) with IFT122 (via C-terminal region). Interacts with BBS1. Interacts with TTC25. In terms of tissue distribution, some isoforms are tissue-specific. Highly expressed in the prostate. Lower expression in the cerebellum, pituitary gland, fetal lung, and pancreas. In normal prostate, expressed in both basal and luminal epithelial cells. No expression detected in fibromuscular stromal cells, endothelial cells, or infiltrating lymphocytes. Uniformed expression in prostate adenocarcinoma cells.

It localises to the cell projection. The protein localises to the cilium. The protein resides in the cytoplasm. Its subcellular location is the cytoskeleton. It is found in the cilium basal body. It localises to the photoreceptor outer segment. The protein localises to the flagellum. As component of the IFT complex A (IFT-A), a complex required for retrograde ciliary transport and entry into cilia of G protein-coupled receptors (GPCRs), it is involved in cilia function and/or assembly. Essential for functional IFT-A assembly and ciliary entry of GPCRs. Associates with the BBSome complex to mediate ciliary transport. This Homo sapiens (Human) protein is WD repeat-containing protein 19.